A 102-amino-acid polypeptide reads, in one-letter code: Aspartyl/glutamyl-tRNA(Asn/Gln) amidotransferase subunit C (102 aa).

Belongs to the GatC family. In terms of assembly, heterotrimer of A, B and C subunits.

The enzyme catalyses L-glutamyl-tRNA(Gln) + L-glutamine + ATP + H2O = L-glutaminyl-tRNA(Gln) + L-glutamate + ADP + phosphate + H(+). The catalysed reaction is L-aspartyl-tRNA(Asn) + L-glutamine + ATP + H2O = L-asparaginyl-tRNA(Asn) + L-glutamate + ADP + phosphate + 2 H(+). Its function is as follows. Allows the formation of correctly charged Asn-tRNA(Asn) or Gln-tRNA(Gln) through the transamidation of misacylated Asp-tRNA(Asn) or Glu-tRNA(Gln) in organisms which lack either or both of asparaginyl-tRNA or glutaminyl-tRNA synthetases. The reaction takes place in the presence of glutamine and ATP through an activated phospho-Asp-tRNA(Asn) or phospho-Glu-tRNA(Gln). The chain is Aspartyl/glutamyl-tRNA(Asn/Gln) amidotransferase subunit C from Bordetella petrii (strain ATCC BAA-461 / DSM 12804 / CCUG 43448).